Reading from the N-terminus, the 89-residue chain is DNA/RNA-binding protein Alba (89 aa).

This sequence belongs to the histone-like Alba family.

It is found in the cytoplasm. The protein localises to the chromosome. Its function is as follows. Binds double-stranded DNA tightly but without sequence specificity. Involved in DNA compaction. The sequence is that of DNA/RNA-binding protein Alba from Methanothrix thermoacetophila (strain DSM 6194 / JCM 14653 / NBRC 101360 / PT) (Methanosaeta thermophila).